Here is a 240-residue protein sequence, read N- to C-terminus: Ubiquinone biosynthesis O-methyltransferase (240 aa).

Residues arginine 44, glycine 64, aspartate 85, and methionine 129 each contribute to the S-adenosyl-L-methionine site.

It belongs to the methyltransferase superfamily. UbiG/COQ3 family.

It catalyses the reaction a 3-demethylubiquinol + S-adenosyl-L-methionine = a ubiquinol + S-adenosyl-L-homocysteine + H(+). The enzyme catalyses a 3-(all-trans-polyprenyl)benzene-1,2-diol + S-adenosyl-L-methionine = a 2-methoxy-6-(all-trans-polyprenyl)phenol + S-adenosyl-L-homocysteine + H(+). It participates in cofactor biosynthesis; ubiquinone biosynthesis. Its function is as follows. O-methyltransferase that catalyzes the 2 O-methylation steps in the ubiquinone biosynthetic pathway. The polypeptide is Ubiquinone biosynthesis O-methyltransferase (Escherichia coli O81 (strain ED1a)).